Reading from the N-terminus, the 66-residue chain is Large ribosomal subunit protein bL31 (66 aa).

Residues Cys-16, Cys-18, Cys-36, and Cys-39 each coordinate Zn(2+).

The protein belongs to the bacterial ribosomal protein bL31 family. Type A subfamily. In terms of assembly, part of the 50S ribosomal subunit. Zn(2+) serves as cofactor.

Its function is as follows. Binds the 23S rRNA. The sequence is that of Large ribosomal subunit protein bL31 from Campylobacter lari (strain RM2100 / D67 / ATCC BAA-1060).